The chain runs to 2289 residues: DNA polymerase II large subunit (2289 aa).

Disordered stretches follow at residues 279–330 and 544–563; these read IGSD…SPRA and SDTN…NTDD. Over residues 292-304 the composition is skewed to basic and acidic residues; the sequence is GEADIVKTDKDTN. Positions 305 to 318 are enriched in acidic residues; the sequence is ESETEDGIDNDDYN. Polar residues predominate over residues 544-557; the sequence is SDTNSASGNTSLRA. DOD-type homing endonuclease domains are found at residues 1222–1367 and 1755–1911; these read LLGY…RLGI and LLGQ…RLGV.

This sequence belongs to the archaeal DNA polymerase II family. Heterodimer of a large subunit and a small subunit. In terms of processing, this protein undergoes a protein self splicing that involves a post-translational excision of the intervening region (intein) followed by peptide ligation.

The catalysed reaction is DNA(n) + a 2'-deoxyribonucleoside 5'-triphosphate = DNA(n+1) + diphosphate. It catalyses the reaction Exonucleolytic cleavage in the 3'- to 5'-direction to yield nucleoside 5'-phosphates.. In terms of biological role, possesses two activities: a DNA synthesis (polymerase) and an exonucleolytic activity that degrades single-stranded DNA in the 3'- to 5'-direction. Has a template-primer preference which is characteristic of a replicative DNA polymerase. The sequence is that of DNA polymerase II large subunit from Haloquadratum walsbyi (strain DSM 16790 / HBSQ001).